Consider the following 224-residue polypeptide: Thylakoid lumenal 15 kDa protein 1, chloroplastic (224 aa).

The transit peptide at 1–34 directs the protein to the chloroplast; it reads MVILSNVSLFSCCNISQKPSLFSPSSRSSHCPIR. A thylakoid-targeting transit peptide spans 35-81; that stretch reads CSQSQEGKEVVTSPLRSVVWSLGEEVSKRSLFALVSASLFFVDPALA. Pentapeptide repeat domains follow at residues 116 to 155 and 156 to 196; these read SILR…DFSL and ANVT…PLRD.

The protein resides in the plastid. It localises to the chloroplast thylakoid lumen. The sequence is that of Thylakoid lumenal 15 kDa protein 1, chloroplastic from Arabidopsis thaliana (Mouse-ear cress).